The chain runs to 771 residues: PH and SEC7 domain-containing protein 2 (771 aa).

2 disordered regions span residues 1 to 67 (MEED…PDVA) and 107 to 136 (GDNASRSLYPDAEDPQLGLDGPGEPDVRDG). Basic and acidic residues predominate over residues 47–66 (GHERRGTPADTEEPTKDPDV). Ser-191 is modified (phosphoserine). 2 disordered regions span residues 207-230 (GDMGAAGGDGELGSPLRRSISSSR) and 244-307 (PNGF…ANGC). Over residues 218–230 (LGSPLRRSISSSR) the composition is skewed to low complexity. The span at 257–266 (GDEDDDEEDT) shows a compositional bias: acidic residues. In terms of domain architecture, SEC7 spans 260 to 462 (DDDEEDTDKL…KTLYNSIKNE (203 aa)). Residues 288–299 (ELSSSEGLEPGS) are compositionally biased toward low complexity. The 114-residue stretch at 512–625 (TTYKHGVLTR…WILRINLVAA (114 aa)) folds into the PH domain. A helical membrane pass occupies residues 622–639 (LVAAIFSAPAFPAAVSSM). Residues 651 to 680 (TTRLCQEEQLRSHENKLRQLTAELAEHRCH) are a coiled coil. The interval 739 to 771 (DDPSLRKTHSSPALSQGHVTGSKTTKDATGPDT) is disordered. Polar residues predominate over residues 748–761 (SSPALSQGHVTGSK).

This sequence belongs to the PSD family.

Its subcellular location is the cell membrane. The protein resides in the cell projection. It localises to the ruffle membrane. It is found in the cleavage furrow. This is PH and SEC7 domain-containing protein 2 (PSD2) from Homo sapiens (Human).